The primary structure comprises 147 residues: Methylglyoxal synthase (147 aa).

Residues 1–147 (MKGQRNIGMV…TPYVKRLGAK (147 aa)) enclose the MGS-like domain. Substrate-binding positions include His12, Lys16, 38–41 (TGTT), and 59–60 (SG). Asp65 functions as the Proton donor/acceptor in the catalytic mechanism. His92 is a substrate binding site.

It belongs to the methylglyoxal synthase family.

The catalysed reaction is dihydroxyacetone phosphate = methylglyoxal + phosphate. Its function is as follows. Catalyzes the formation of methylglyoxal from dihydroxyacetone phosphate. This chain is Methylglyoxal synthase, found in Oleidesulfovibrio alaskensis (strain ATCC BAA-1058 / DSM 17464 / G20) (Desulfovibrio alaskensis).